A 163-amino-acid chain; its full sequence is MHKKYFIGTSILIAVFVVIFDQVTKYIIATTMKIGDSFEVIPHFLNITSHRNNGAAWGILSGKMTFFFIITIIILIALVYFFIKDAQYNLFMQVAISLLFAGALGNFIDRILTGEVVDFIDTNIFGYDFPIFNIADSSLTIGVILIIIALLKDTSNKKEKEVK.

The next 3 helical transmembrane spans lie at 11 to 31 (ILIA…IATT), 63 to 83 (KMTF…YFFI), and 88 to 108 (YNLF…GNFI). Active-site residues include aspartate 118 and aspartate 136. A helical transmembrane segment spans residues 131-151 (IFNIADSSLTIGVILIIIALL).

It belongs to the peptidase A8 family.

It localises to the cell membrane. The catalysed reaction is Release of signal peptides from bacterial membrane prolipoproteins. Hydrolyzes -Xaa-Yaa-Zaa-|-(S,diacylglyceryl)Cys-, in which Xaa is hydrophobic (preferably Leu), and Yaa (Ala or Ser) and Zaa (Gly or Ala) have small, neutral side chains.. The protein operates within protein modification; lipoprotein biosynthesis (signal peptide cleavage). Its function is as follows. This protein specifically catalyzes the removal of signal peptides from prolipoproteins. This Staphylococcus aureus (strain Mu3 / ATCC 700698) protein is Lipoprotein signal peptidase.